We begin with the raw amino-acid sequence, 63 residues long: Large ribosomal subunit protein uL29 (63 aa).

It belongs to the universal ribosomal protein uL29 family.

This Actinobacillus pleuropneumoniae serotype 5b (strain L20) protein is Large ribosomal subunit protein uL29.